The chain runs to 129 residues: Small ribosomal subunit protein uS11 (129 aa).

This sequence belongs to the universal ribosomal protein uS11 family. Part of the 30S ribosomal subunit. Interacts with proteins S7 and S18. Binds to IF-3.

Located on the platform of the 30S subunit, it bridges several disparate RNA helices of the 16S rRNA. Forms part of the Shine-Dalgarno cleft in the 70S ribosome. The protein is Small ribosomal subunit protein uS11 of Desulfovibrio desulfuricans (strain ATCC 27774 / DSM 6949 / MB).